Consider the following 425-residue polypeptide: Phosphoribosylamine--glycine ligase (425 aa).

An ATP-grasp domain is found at 109–315 (KALMQEAGIP…LEELILACVQ (207 aa)). Residue 135–195 (IQAQGAPIVV…EECLTGQEVS (61 aa)) participates in ATP binding. 2 residues coordinate Mg(2+): Glu285 and Asn287.

It belongs to the GARS family. The cofactor is Mg(2+). Mn(2+) serves as cofactor.

It carries out the reaction 5-phospho-beta-D-ribosylamine + glycine + ATP = N(1)-(5-phospho-beta-D-ribosyl)glycinamide + ADP + phosphate + H(+). It functions in the pathway purine metabolism; IMP biosynthesis via de novo pathway; N(1)-(5-phospho-D-ribosyl)glycinamide from 5-phospho-alpha-D-ribose 1-diphosphate: step 2/2. The chain is Phosphoribosylamine--glycine ligase from Nostoc sp. (strain PCC 7120 / SAG 25.82 / UTEX 2576).